The sequence spans 287 residues: Outer membrane protein TP0453 (287 aa).

Positions 1–24 (MIRRRYRGCTQGAWIVSVGMLFAS) are cleaved as a signal peptide. Cys-25 carries N-palmitoyl cysteine lipidation. Residue Cys-25 is the site of S-diacylglycerol cysteine attachment. Amphipathic helix stretches follow at residues 36-40 (PLGVV), 56-63 (ENLISRII), 69-77 (KADIKKIVD), 103-112 (YAFTNLIFSR), 155-162 (MSKMLSRL), 172-179 (PRFEKECT), 194-202 (GGHFITKLL), 240-250 (FPIQFLISRVL), and 270-279 (AERLASVISS).

In terms of assembly, a mix of monomer and dimers; may integrate into the membrane as a dimer. Post-translationally, palmitoylated upon expression of a fusion protein with first 46 residues fused to PhoA in E.coli.

It localises to the cell outer membrane. Functionally, might be involved in ligand transport, alters membrane permeability at acidic pH (4.0 to 5.5). Incubation of the non-lipidated form with lipid vesicles increases their permeability. This Treponema pallidum (strain Nichols) protein is Outer membrane protein TP0453.